A 507-amino-acid chain; its full sequence is Protein disulfide-isomerase (507 aa).

The signal sequence occupies residues 1–20 (MASMVSFCFLLLFLAFFASS). One can recognise a Thioredoxin 1 domain in the interval 21 to 144 (FNEIYAEESE…IVDYLKKQSG (124 aa)). Catalysis depends on nucleophile residues C62 and C65. C62 and C65 are disulfide-bonded. Residues N181 and N278 are each glycosylated (N-linked (GlcNAc...) asparagine). One can recognise a Thioredoxin 2 domain in the interval 365–485 (YRKSEPIPEH…FIEFIEKNRE (121 aa)). Catalysis depends on nucleophile residues C407 and C410. Cysteines 407 and 410 form a disulfide. Residues 484 to 507 (REKSSKKESIVKDDQTDSETKAEL) form a disordered region. Residues 504 to 507 (KAEL) carry the Prevents secretion from ER motif.

This sequence belongs to the protein disulfide isomerase family.

It localises to the endoplasmic reticulum lumen. The catalysed reaction is Catalyzes the rearrangement of -S-S- bonds in proteins.. Participates in the folding of proteins containing disulfide bonds, may be involved in glycosylation, prolyl hydroxylation and triglyceride transfer. This Datisca glomerata (Durango root) protein is Protein disulfide-isomerase (PDI).